The chain runs to 193 residues: Acyl carrier protein phosphodiesterase (193 aa).

Belongs to the AcpH family.

The catalysed reaction is holo-[ACP] + H2O = apo-[ACP] + (R)-4'-phosphopantetheine + H(+). In terms of biological role, converts holo-ACP to apo-ACP by hydrolytic cleavage of the phosphopantetheine prosthetic group from ACP. This chain is Acyl carrier protein phosphodiesterase, found in Escherichia coli O6:H1 (strain CFT073 / ATCC 700928 / UPEC).